Here is a 341-residue protein sequence, read N- to C-terminus: L-threonine 3-dehydrogenase (341 aa).

Cysteine 38 contacts Zn(2+). Catalysis depends on charge relay system residues threonine 40 and histidine 43. The Zn(2+) site is built by histidine 63, glutamate 64, cysteine 93, cysteine 96, cysteine 99, and cysteine 107. NAD(+) contacts are provided by residues isoleucine 175, aspartate 195, arginine 200, 262-264 (LGI), and 286-287 (IY).

Belongs to the zinc-containing alcohol dehydrogenase family. In terms of assembly, homotetramer. Requires Zn(2+) as cofactor.

It is found in the cytoplasm. The enzyme catalyses L-threonine + NAD(+) = (2S)-2-amino-3-oxobutanoate + NADH + H(+). It functions in the pathway amino-acid degradation; L-threonine degradation via oxydo-reductase pathway; glycine from L-threonine: step 1/2. In terms of biological role, catalyzes the NAD(+)-dependent oxidation of L-threonine to 2-amino-3-ketobutyrate. This Shewanella frigidimarina (strain NCIMB 400) protein is L-threonine 3-dehydrogenase.